Here is a 567-residue protein sequence, read N- to C-terminus: Zinc finger protein 512 (567 aa).

The interval 1–32 (MSSRLGAVPATSGPTTFKQQRSTRIVGAKNSR) is disordered. Residues 12–23 (SGPTTFKQQRST) are compositionally biased toward polar residues. Residues K18 and K84 each participate in a glycyl lysine isopeptide (Lys-Gly) (interchain with G-Cter in SUMO2) cross-link. Positions 86–148 (AATSHVEGSG…QARRIRKEPP (63 aa)) are disordered. Over residues 119–130 (KKHKLYGRKQRP) the composition is skewed to basic residues. The C2H2-type 1 zinc-finger motif lies at 197-220 (FTCHHCGKQLRSLAGMKYHVMANH). A Glycyl lysine isopeptide (Lys-Gly) (interchain with G-Cter in SUMO2) cross-link involves residue K227. The C2H2-type 2 zinc-finger motif lies at 287–310 (LKCHHCGKPYRSKAGLAYHLRSEH). Residue K333 forms a Glycyl lysine isopeptide (Lys-Gly) (interchain with G-Cter in SUMO2) linkage. Residues 406–430 (IQCPNQGCEAVYSSVSGLKAHLGSC) form a C2H2-type 3; atypical zinc finger. The C2H2-type 4 zinc-finger motif lies at 440-463 (YKCLLCQKEFVSESGVKYHINSVH). The disordered stretch occupies residues 486 to 567 (QRQQEEEKRR…PKTNHKRGRK (82 aa)). The segment covering 495–508 (RQQHRSRRSLRRRQ) has biased composition (basic residues). Over residues 523–532 (VGKDQRRNNE) the composition is skewed to basic and acidic residues. Residues 556–567 (KPPKTNHKRGRK) show a composition bias toward basic residues.

This sequence belongs to the krueppel C2H2-type zinc-finger protein family.

The protein resides in the nucleus. Its function is as follows. May be involved in transcriptional regulation. This Pongo abelii (Sumatran orangutan) protein is Zinc finger protein 512 (ZNF512).